Consider the following 562-residue polypeptide: O-fucosyltransferase 4 (562 aa).

The disordered stretch occupies residues 10–46 (SIQNRLPGSDHTTPSPPTSPHLCRSRSKSSSVSGQQQ). The segment covering 37–46 (KSSSVSGQQQ) has biased composition (low complexity). The chain crosses the membrane as a helical; Signal-anchor for type II membrane protein span at residues 67-87 (GILLFAPIIYISCMLFHLHAA). 4 N-linked (GlcNAc...) asparagine glycosylation sites follow: N122, N146, N185, and N239. A substrate-binding site is contributed by 332 to 334 (HLR). Residues N404, N420, N450, and N555 are each glycosylated (N-linked (GlcNAc...) asparagine).

This sequence belongs to the glycosyltransferase GT106 family.

It is found in the membrane. Its pathway is glycan metabolism. The protein is O-fucosyltransferase 4 of Arabidopsis thaliana (Mouse-ear cress).